The sequence spans 664 residues: DNA mismatch repair protein MutL (664 aa).

The segment at 382–447 (RKAGQEQQLQ…YGEPAPSKQQ (66 aa)) is disordered. Polar residues predominate over residues 427 to 436 (RHTTSSNQSE).

Belongs to the DNA mismatch repair MutL/HexB family.

This protein is involved in the repair of mismatches in DNA. It is required for dam-dependent methyl-directed DNA mismatch repair. May act as a 'molecular matchmaker', a protein that promotes the formation of a stable complex between two or more DNA-binding proteins in an ATP-dependent manner without itself being part of a final effector complex. The polypeptide is DNA mismatch repair protein MutL (Vibrio vulnificus (strain CMCP6)).